Reading from the N-terminus, the 367-residue chain is Dimethyladenosine transferase 1, mitochondrial (367 aa).

Residues 1-16 (MASASRLPPLPALRDF) constitute a mitochondrion transit peptide. S-adenosyl-L-methionine is bound by residues 30–33 (QNYL), Asn31, Leu33, Gly58, Glu80, Asp106, and Asn141.

The protein belongs to the class I-like SAM-binding methyltransferase superfamily. rRNA adenine N(6)-methyltransferase family. KsgA subfamily.

The protein resides in the mitochondrion. Probable S-adenosyl-L-methionine-dependent methyltransferase which specifically dimethylates mitochondrial 12S rRNA at the conserved stem loop. Also required for basal transcription of mitochondrial DNA. Stimulates transcription independently of the methyltransferase activity. This is Dimethyladenosine transferase 1, mitochondrial (tfbm-1) from Caenorhabditis elegans.